Reading from the N-terminus, the 264-residue chain is MSEITKITAQKRRGRYNIFIDGTYAFPVSETTLVDYRLAKGMVLTAETVAQIKSSEVTAMGLEIGLTYISHQSRTSKEVSDRLAKEDLPADVIQKVLTRLTDLGFLDDADYAHRYIEEHLKMGELGPRTLQHKLQQKGLKPDLLANELAAIPTTAWLDAAVRAGQKNLRHHQHRAYKDQLQRLRVALMQKGFDDTTIQTAIATIDPQPDPEAESDLLKLEAAKQWRLKAKYDDRERKQKVKTTLFRKGFDVEAIDEVLDDLAES.

It belongs to the RecX family.

It is found in the cytoplasm. Functionally, modulates RecA activity. The sequence is that of Regulatory protein RecX from Lacticaseibacillus casei (strain BL23) (Lactobacillus casei).